A 353-amino-acid polypeptide reads, in one-letter code: Phosphoribosylformylglycinamidine cyclo-ligase (353 aa).

The protein belongs to the AIR synthase family.

Its subcellular location is the cytoplasm. The catalysed reaction is 2-formamido-N(1)-(5-O-phospho-beta-D-ribosyl)acetamidine + ATP = 5-amino-1-(5-phospho-beta-D-ribosyl)imidazole + ADP + phosphate + H(+). The protein operates within purine metabolism; IMP biosynthesis via de novo pathway; 5-amino-1-(5-phospho-D-ribosyl)imidazole from N(2)-formyl-N(1)-(5-phospho-D-ribosyl)glycinamide: step 2/2. The chain is Phosphoribosylformylglycinamidine cyclo-ligase from Pseudomonas aeruginosa (strain ATCC 15692 / DSM 22644 / CIP 104116 / JCM 14847 / LMG 12228 / 1C / PRS 101 / PAO1).